Consider the following 308-residue polypeptide: MIIVTGGAGFIGSNIVKSLNDLGRKDILVVDNLKDGTKFINLVDLDIADYCDKEDFIAQIIAGDDFGDIDAVFHEGACSATTEWDGKYIMHNNYEYSKELLHYCLDREIPFFYASSAATYGDKTEFVEERQFEGPLNVYGYSKFLFDQYVREILPNASSPVCGFKYFNVYGPREQHKGSMSSVAFHLNNQILKGENPKLFAGSEHFLRDFVYVGDVAAVNIWAWQNKISGIFNCGTGHAESFKAVAEAVIKHHGKGAIETIPFPDHLKSRYQEYTQADLTKLRAAGCNLKFKSVAEGVAEYMAWLNRK.

Residues 10-11 (FI), 31-32 (DN), Lys-38, Lys-53, 75-79 (EGACS), and Asn-92 each bind NADP(+). The active-site Proton acceptor is Tyr-139. An NADP(+)-binding site is contributed by Lys-143. Substrate is bound at residue Asn-168. Val-169 and Lys-177 together coordinate NADP(+). Lys-177 acts as the Proton acceptor in catalysis. Substrate is bound by residues Ser-179, His-186, 200–203 (FAGS), Arg-208, and Tyr-271.

The protein belongs to the NAD(P)-dependent epimerase/dehydratase family. HldD subfamily. As to quaternary structure, homopentamer. It depends on NADP(+) as a cofactor.

It carries out the reaction ADP-D-glycero-beta-D-manno-heptose = ADP-L-glycero-beta-D-manno-heptose. It participates in nucleotide-sugar biosynthesis; ADP-L-glycero-beta-D-manno-heptose biosynthesis; ADP-L-glycero-beta-D-manno-heptose from D-glycero-beta-D-manno-heptose 7-phosphate: step 4/4. Catalyzes the interconversion between ADP-D-glycero-beta-D-manno-heptose and ADP-L-glycero-beta-D-manno-heptose via an epimerization at carbon 6 of the heptose. The chain is ADP-L-glycero-D-manno-heptose-6-epimerase from Actinobacillus succinogenes (strain ATCC 55618 / DSM 22257 / CCUG 43843 / 130Z).